The sequence spans 174 residues: Co-chaperone protein HscB homolog (174 aa).

The J domain occupies 2–74 (NYFELFNLPV…IRRAEHMLAL (73 aa)).

It belongs to the HscB family. In terms of assembly, interacts with HscA and stimulates its ATPase activity.

Co-chaperone involved in the maturation of iron-sulfur cluster-containing proteins. Seems to help targeting proteins to be folded toward HscA. This Shewanella amazonensis (strain ATCC BAA-1098 / SB2B) protein is Co-chaperone protein HscB homolog.